We begin with the raw amino-acid sequence, 188 residues long: GMP synthase [glutamine-hydrolyzing] subunit A (188 aa).

In terms of domain architecture, Glutamine amidotransferase type-1 spans 1 to 188 (MIVILNNGGQ…FCKVCGLLGE (188 aa)). Cys76 acts as the Nucleophile in catalysis. Catalysis depends on residues His163 and Glu165.

As to quaternary structure, heterodimer composed of a glutamine amidotransferase subunit (A) and a GMP-binding subunit (B).

The catalysed reaction is XMP + L-glutamine + ATP + H2O = GMP + L-glutamate + AMP + diphosphate + 2 H(+). It functions in the pathway purine metabolism; GMP biosynthesis; GMP from XMP (L-Gln route): step 1/1. Catalyzes the synthesis of GMP from XMP. This chain is GMP synthase [glutamine-hydrolyzing] subunit A, found in Methanococcus aeolicus (strain ATCC BAA-1280 / DSM 17508 / OCM 812 / Nankai-3).